The chain runs to 116 residues: Large ribosomal subunit protein uL24 (116 aa).

This sequence belongs to the universal ribosomal protein uL24 family. In terms of assembly, part of the 50S ribosomal subunit.

In terms of biological role, one of two assembly initiator proteins, it binds directly to the 5'-end of the 23S rRNA, where it nucleates assembly of the 50S subunit. Located at the polypeptide exit tunnel on the outside of the subunit. This is Large ribosomal subunit protein uL24 from Methanothrix thermoacetophila (strain DSM 6194 / JCM 14653 / NBRC 101360 / PT) (Methanosaeta thermophila).